We begin with the raw amino-acid sequence, 146 residues long: 3-hydroxyacyl-[acyl-carrier-protein] dehydratase FabZ (146 aa).

Residue His-47 is part of the active site.

Belongs to the thioester dehydratase family. FabZ subfamily.

The protein resides in the cytoplasm. It carries out the reaction a (3R)-hydroxyacyl-[ACP] = a (2E)-enoyl-[ACP] + H2O. Involved in unsaturated fatty acids biosynthesis. Catalyzes the dehydration of short chain beta-hydroxyacyl-ACPs and long chain saturated and unsaturated beta-hydroxyacyl-ACPs. The polypeptide is 3-hydroxyacyl-[acyl-carrier-protein] dehydratase FabZ (Methylococcus capsulatus (strain ATCC 33009 / NCIMB 11132 / Bath)).